Here is a 114-residue protein sequence, read N- to C-terminus: Large ribosomal subunit protein bL19 (114 aa).

Belongs to the bacterial ribosomal protein bL19 family.

This protein is located at the 30S-50S ribosomal subunit interface and may play a role in the structure and function of the aminoacyl-tRNA binding site. This Clostridium acetobutylicum (strain ATCC 824 / DSM 792 / JCM 1419 / IAM 19013 / LMG 5710 / NBRC 13948 / NRRL B-527 / VKM B-1787 / 2291 / W) protein is Large ribosomal subunit protein bL19.